The sequence spans 390 residues: MPLQDFLFTSESVTEGHPDKMADQISDAVLDAVLRQDPKGRVACETLLKTGYVMIAGEITTKARIDYPKLARETVRRIGYTSGDMGFDANTCAVLVAVDQQSPDIGQGVDTGGAGDQGMMFGYACDETPELMPAPIQYAHAVTKQLAKARRAGLDFLRPDGKSQVSVEYRDGRPVRIDTVVVSTQHAESVSNKRLHEAVREQVIAKALPKRLLDRKTRILINPTGRFVIGGPMGDTGVTGRKIIVDTYGGMGRHGGGAFSGKDPSKVDRSAAYMGRYIAKNVVAAGLASRCEVQVAYAIGVAEPVSVMVDTFGTAKVPEGKIARAVREVFGLTPRAIIEGLDLLRPVYEKTAAYGHFGRTEKTFTWERTDKKDALADAAGLSKIRAVASV.

His-17 is a binding site for ATP. Asp-19 contributes to the Mg(2+) binding site. Glu-45 provides a ligand contact to K(+). L-methionine-binding residues include Glu-58 and Gln-101. The segment at 101 to 111 (QSPDIGQGVDT) is flexible loop. ATP contacts are provided by residues 160 to 162 (DGK), 226 to 227 (RF), Asp-235, 241 to 242 (RK), Ala-258, and Lys-262. L-methionine is bound at residue Asp-235. Lys-266 contacts L-methionine.

Belongs to the AdoMet synthase family. In terms of assembly, homotetramer; dimer of dimers. The cofactor is Mg(2+). It depends on K(+) as a cofactor.

Its subcellular location is the cytoplasm. The catalysed reaction is L-methionine + ATP + H2O = S-adenosyl-L-methionine + phosphate + diphosphate. Its pathway is amino-acid biosynthesis; S-adenosyl-L-methionine biosynthesis; S-adenosyl-L-methionine from L-methionine: step 1/1. Catalyzes the formation of S-adenosylmethionine (AdoMet) from methionine and ATP. The overall synthetic reaction is composed of two sequential steps, AdoMet formation and the subsequent tripolyphosphate hydrolysis which occurs prior to release of AdoMet from the enzyme. This chain is S-adenosylmethionine synthase, found in Anaeromyxobacter dehalogenans (strain 2CP-1 / ATCC BAA-258).